Here is a 147-residue protein sequence, read N- to C-terminus: Histone H2B (147 aa).

Residues 1 to 31 (MAPKAEKKPAEKKPAEEKKAVAEKAPAEKKP) are compositionally biased toward basic and acidic residues. The tract at residues 1 to 55 (MAPKAEKKPAEKKPAEEKKAVAEKAPAEKKPKAGKKLPKEGGAAAGDKKKKRVKK) is disordered. N6-acetyllysine is present on residues Lys-7, Lys-35, and Lys-36. Residue Lys-143 forms a Glycyl lysine isopeptide (Lys-Gly) (interchain with G-Cter in ubiquitin) linkage.

Belongs to the histone H2B family. As to quaternary structure, the nucleosome is a histone octamer containing two molecules each of H2A, H2B, H3 and H4 assembled in one H3-H4 heterotetramer and two H2A-H2B heterodimers. The octamer wraps approximately 147 bp of DNA. Can be acetylated to form H2BK6ac, H2BK33ac and H2BK34ac. Post-translationally, monoubiquitinated to form H2BK143ub1; may give a specific tag for epigenetic transcriptional activation.

It localises to the nucleus. The protein resides in the chromosome. Its function is as follows. Core component of nucleosome. Nucleosomes wrap and compact DNA into chromatin, limiting DNA accessibility to the cellular machineries which require DNA as a template. Histones thereby play a central role in transcription regulation, DNA repair, DNA replication and chromosomal stability. DNA accessibility is regulated via a complex set of post-translational modifications of histones, also called histone code, and nucleosome remodeling. This Gossypium hirsutum (Upland cotton) protein is Histone H2B (HIS2B).